A 327-amino-acid chain; its full sequence is tRNA uridine(34) hydroxylase (327 aa).

The 95-residue stretch at 130–224 folds into the Rhodanese domain; that stretch reads LDEDTVVLDT…YGKDPEVQGE (95 aa). Cys-184 functions as the Cysteine persulfide intermediate in the catalytic mechanism.

It belongs to the TrhO family.

The catalysed reaction is uridine(34) in tRNA + AH2 + O2 = 5-hydroxyuridine(34) in tRNA + A + H2O. Its function is as follows. Catalyzes oxygen-dependent 5-hydroxyuridine (ho5U) modification at position 34 in tRNAs. The chain is tRNA uridine(34) hydroxylase from Streptococcus thermophilus (strain CNRZ 1066).